The following is a 486-amino-acid chain: Protein DETOXIFICATION 16 (486 aa).

12 consecutive transmembrane segments (helical) span residues 35–55, 68–88, 117–137, 142–162, 179–199, 207–227, 259–279, 288–308, 331–351, 365–385, 401–421, and 433–453; these read GPLI…VMFV, IATS…ASAL, LASI…VFFG, IATL…AYGL, VVFC…VLVF, GAAL…FCYV, ALMV…SGLL, VLSI…GLSG, RVVI…LILI, VVSY…LDSL, IGAI…GLLL, and WLGI…VTIF.

It belongs to the multi antimicrobial extrusion (MATE) (TC 2.A.66.1) family.

It localises to the membrane. This is Protein DETOXIFICATION 16 from Arabidopsis thaliana (Mouse-ear cress).